The following is a 267-amino-acid chain: Tryptophan synthase alpha chain (267 aa).

Residues glutamate 49 and aspartate 60 each act as proton acceptor in the active site.

It belongs to the TrpA family. In terms of assembly, tetramer of two alpha and two beta chains.

It carries out the reaction (1S,2R)-1-C-(indol-3-yl)glycerol 3-phosphate + L-serine = D-glyceraldehyde 3-phosphate + L-tryptophan + H2O. It functions in the pathway amino-acid biosynthesis; L-tryptophan biosynthesis; L-tryptophan from chorismate: step 5/5. The alpha subunit is responsible for the aldol cleavage of indoleglycerol phosphate to indole and glyceraldehyde 3-phosphate. This chain is Tryptophan synthase alpha chain, found in Acinetobacter baumannii (strain AB307-0294).